The following is a 395-amino-acid chain: Thyrotropin-releasing hormone receptor (395 aa).

At 1–30 (MENGTGDEQNHTGLLLSSQEFVTAEYQVVT) the chain is on the extracellular side. 2 N-linked (GlcNAc...) asparagine glycosylation sites follow: asparagine 3 and asparagine 10. A helical membrane pass occupies residues 31-53 (ILLVLLICGLGIVGNIMVVLVVL). At 54 to 63 (RTKHMRTPTN) the chain is on the cytoplasmic side. A helical transmembrane segment spans residues 64 to 85 (CYLVSLAVADLMVLVAAGLPNI). The Extracellular segment spans residues 86 to 101 (TESLYKSWVYGYVGCL). A disulfide bridge connects residues cysteine 100 and cysteine 181. The chain crosses the membrane as a helical span at residues 102-123 (CITYLQYLGINASSFSITAFTI). Topologically, residues 124–146 (ERYIAICHPIKAQFLCTFSRAKK) are cytoplasmic. A helical membrane pass occupies residues 147–170 (IIIFVWSFASVYCMLWFFLLDLNI). At 171 to 195 (AVYKDTTVVSCGYKVSRSYYSPIYM) the chain is on the extracellular side. Residues 196-217 (MDFGIFYVLPMVLATVLYGLIA) traverse the membrane as a helical segment. Residues 218–268 (RILFLNPIPSDPKENSNTWKNDMAQQNKTVNSKMTNKSFNSTIASRRQVTK) lie on the Cytoplasmic side of the membrane. A helical membrane pass occupies residues 269–290 (MLAVVVVLFAFLWMPYRTLVVV). At 291–298 (NSFLSSPF) the chain is on the extracellular side. The helical transmembrane segment at 299–321 (QENWFLLFCRICIYLNSAINPVI) threads the bilayer. At 322 to 395 (YNLMSQKFRA…IGDTCLSSEA (74 aa)) the chain is on the cytoplasmic side.

It belongs to the G-protein coupled receptor 1 family.

The protein resides in the cell membrane. In terms of biological role, receptor for thyrotropin-releasing hormone (TRH). Upon ligand binding, this G-protein-coupled receptor triggers activation of the phosphatidylinositol (IP3)-calcium-protein kinase C (PKC) pathway. The polypeptide is Thyrotropin-releasing hormone receptor (TRHR) (Gallus gallus (Chicken)).